The sequence spans 701 residues: Elongation factor G (701 aa).

The tr-type G domain maps to 8–290 (SLYRNIGISA…AVVELLPAPT (283 aa)). Residues 17 to 24 (AHIDAGKT), 88 to 92 (DTPGH), and 142 to 145 (NKMD) contribute to the GTP site.

It belongs to the TRAFAC class translation factor GTPase superfamily. Classic translation factor GTPase family. EF-G/EF-2 subfamily.

The protein resides in the cytoplasm. Functionally, catalyzes the GTP-dependent ribosomal translocation step during translation elongation. During this step, the ribosome changes from the pre-translocational (PRE) to the post-translocational (POST) state as the newly formed A-site-bound peptidyl-tRNA and P-site-bound deacylated tRNA move to the P and E sites, respectively. Catalyzes the coordinated movement of the two tRNA molecules, the mRNA and conformational changes in the ribosome. This Neisseria meningitidis serogroup B (strain ATCC BAA-335 / MC58) protein is Elongation factor G.